Here is a 267-residue protein sequence, read N- to C-terminus: 5'-nucleotidase SurE (267 aa).

Asp-9, Asp-10, Ser-40, and Asn-97 together coordinate a divalent metal cation.

Belongs to the SurE nucleotidase family. A divalent metal cation serves as cofactor.

Its subcellular location is the cytoplasm. It carries out the reaction a ribonucleoside 5'-phosphate + H2O = a ribonucleoside + phosphate. Its function is as follows. Nucleotidase that shows phosphatase activity on nucleoside 5'-monophosphates. This chain is 5'-nucleotidase SurE, found in Helicobacter pylori (strain HPAG1).